We begin with the raw amino-acid sequence, 109 residues long: uncharacterized protein (109 aa).

Residues M1 to V26 are disordered.

This is an uncharacterized protein from Mycobacterium bovis (strain ATCC BAA-935 / AF2122/97).